The primary structure comprises 625 residues: Probable inactive receptor kinase At5g16590 (625 aa).

An N-terminal signal peptide occupies residues 1 to 23 (MKNKTNLGLSVFFFFICLVSVTS). LRR repeat units follow at residues 88 to 111 (KLET…ANLT), 112 to 134 (LLRY…LFTL), 136 to 158 (NIIR…VNSA), 160 to 182 (RLAT…KIKL), and 183 to 204 (QQFN…SGMP). The helical transmembrane segment at 246–266 (AIVGIVIGCFVLLLVLFLIVF) threads the bilayer. A Protein kinase domain is found at 343 to 613 (KASAEVLGKG…PEVTRLIEEV (271 aa)). Phosphoserine is present on Ser-345. ATP is bound by residues 349 to 357 (LGKGTFGSS) and Lys-371. At Ser-422 the chain carries Phosphoserine. Phosphothreonine occurs at positions 442 and 496. Ser-517 bears the Phosphoserine mark. Residue Thr-593 is modified to Phosphothreonine. Phosphoserine is present on residues Ser-619 and Ser-624.

The protein belongs to the protein kinase superfamily. Ser/Thr protein kinase family.

Its subcellular location is the cell membrane. Functionally, might be involved in early recognition of growth promoting fungi. Appears to be specific for P.indica. The chain is Probable inactive receptor kinase At5g16590 from Arabidopsis thaliana (Mouse-ear cress).